The chain runs to 188 residues: Inosine triphosphate pyrophosphatase (188 aa).

9 to 14 (TGNAKK) lines the ITP pocket. Glu-39 is a Mg(2+) binding site. Residues Lys-51, 67–68 (DT), Lys-84, 143–146 (FGWD), Lys-166, and 171–172 (HR) each bind ITP.

It belongs to the HAM1 NTPase family. In terms of assembly, homodimer. The cofactor is Mg(2+). Requires Mn(2+) as cofactor.

It is found in the cytoplasm. It carries out the reaction ITP + H2O = IMP + diphosphate + H(+). It catalyses the reaction dITP + H2O = dIMP + diphosphate + H(+). The enzyme catalyses XTP + H2O = XMP + diphosphate + H(+). Functionally, pyrophosphatase that hydrolyzes non-canonical purine nucleotides such as inosine triphosphate (ITP), deoxyinosine triphosphate (dITP) or xanthosine 5'-triphosphate (XTP) to their respective monophosphate derivatives. The enzyme does not distinguish between the deoxy- and ribose forms. Probably excludes non-canonical purines from RNA and DNA precursor pools, thus preventing their incorporation into RNA and DNA and avoiding chromosomal lesions. The chain is Inosine triphosphate pyrophosphatase from Anopheles gambiae (African malaria mosquito).